Here is a 228-residue protein sequence, read N- to C-terminus: MAYPLQLGFQDATSPVMEELLHFHDHTLMIIFLISSLVLYIIMLMLTSKLVHTNMMNVQEMEMIWTILPAIILILIALPSLHTLYMMDEINNPLLTIKTMGHQWFWSYEYTDYEDLAFDSYMITTDSLKFGELRLLEVDNRMVLPTDLPVRVLVSSEDVLHSWAVPSLGLKTDAIPGRLNQVTLTSMRPGLFYGQCSEICGANHSFMPIVLELVPLKYFENWSASLAQ.

Topologically, residues 1 to 14 (MAYPLQLGFQDATS) are mitochondrial intermembrane. The chain crosses the membrane as a helical span at residues 15 to 45 (PVMEELLHFHDHTLMIIFLISSLVLYIIMLM). Over 46-59 (LTSKLVHTNMMNVQ) the chain is Mitochondrial matrix. Residues 60–87 (EMEMIWTILPAIILILIALPSLHTLYMM) traverse the membrane as a helical segment. Residues 88-228 (DEINNPLLTI…FENWSASLAQ (141 aa)) are Mitochondrial intermembrane-facing. His161, Cys196, Glu198, Cys200, His204, and Met207 together coordinate Cu cation. Residue Glu198 coordinates Mg(2+). Position 218 is a phosphotyrosine (Tyr218).

Belongs to the cytochrome c oxidase subunit 2 family. As to quaternary structure, component of the cytochrome c oxidase (complex IV, CIV), a multisubunit enzyme composed of 14 subunits. The complex is composed of a catalytic core of 3 subunits MT-CO1, MT-CO2 and MT-CO3, encoded in the mitochondrial DNA, and 11 supernumerary subunits COX4I, COX5A, COX5B, COX6A, COX6B, COX6C, COX7A, COX7B, COX7C, COX8 and NDUFA4, which are encoded in the nuclear genome. The complex exists as a monomer or a dimer and forms supercomplexes (SCs) in the inner mitochondrial membrane with NADH-ubiquinone oxidoreductase (complex I, CI) and ubiquinol-cytochrome c oxidoreductase (cytochrome b-c1 complex, complex III, CIII), resulting in different assemblies (supercomplex SCI(1)III(2)IV(1) and megacomplex MCI(2)III(2)IV(2)). Found in a complex with TMEM177, COA6, COX18, COX20, SCO1 and SCO2. Interacts with TMEM177 in a COX20-dependent manner. Interacts with COX20. Interacts with COX16. Cu cation serves as cofactor.

The protein resides in the mitochondrion inner membrane. It catalyses the reaction 4 Fe(II)-[cytochrome c] + O2 + 8 H(+)(in) = 4 Fe(III)-[cytochrome c] + 2 H2O + 4 H(+)(out). In terms of biological role, component of the cytochrome c oxidase, the last enzyme in the mitochondrial electron transport chain which drives oxidative phosphorylation. The respiratory chain contains 3 multisubunit complexes succinate dehydrogenase (complex II, CII), ubiquinol-cytochrome c oxidoreductase (cytochrome b-c1 complex, complex III, CIII) and cytochrome c oxidase (complex IV, CIV), that cooperate to transfer electrons derived from NADH and succinate to molecular oxygen, creating an electrochemical gradient over the inner membrane that drives transmembrane transport and the ATP synthase. Cytochrome c oxidase is the component of the respiratory chain that catalyzes the reduction of oxygen to water. Electrons originating from reduced cytochrome c in the intermembrane space (IMS) are transferred via the dinuclear copper A center (CU(A)) of subunit 2 and heme A of subunit 1 to the active site in subunit 1, a binuclear center (BNC) formed by heme A3 and copper B (CU(B)). The BNC reduces molecular oxygen to 2 water molecules using 4 electrons from cytochrome c in the IMS and 4 protons from the mitochondrial matrix. The sequence is that of Cytochrome c oxidase subunit 2 (MT-CO2) from Loxodonta africana (African elephant).